The chain runs to 181 residues: Probable N-acetyltransferase YjcK (181 aa).

Positions 7-172 (IYVRPLEVTD…NGVWEDHQVL (166 aa)) constitute an N-acetyltransferase domain.

The protein belongs to the acetyltransferase family. RimJ subfamily.

It catalyses the reaction an N-terminal L-alpha-aminoacyl-[protein] + acetyl-CoA = N-terminal N(alpha)-acetyl-L-alpha-aminoacyl-[protein] + CoA + H(+). Its function is as follows. Probable N-terminal protein acetyltransferase. The protein is Probable N-acetyltransferase YjcK (yjcK) of Bacillus subtilis (strain 168).